Here is a 509-residue protein sequence, read N- to C-terminus: Kynureninase 1 (509 aa).

Residues Leu169, Thr170, 197–200, Asp283, His286, and Tyr308 contribute to the pyridoxal 5'-phosphate site; that span reads FPSD. At Lys309 the chain carries N6-(pyridoxal phosphate)lysine. Residues Trp349 and Asn377 each contribute to the pyridoxal 5'-phosphate site.

The protein belongs to the kynureninase family. As to quaternary structure, homodimer. Pyridoxal 5'-phosphate is required as a cofactor.

It localises to the cytoplasm. The enzyme catalyses L-kynurenine + H2O = anthranilate + L-alanine + H(+). It carries out the reaction 3-hydroxy-L-kynurenine + H2O = 3-hydroxyanthranilate + L-alanine + H(+). The protein operates within amino-acid degradation; L-kynurenine degradation; L-alanine and anthranilate from L-kynurenine: step 1/1. It functions in the pathway cofactor biosynthesis; NAD(+) biosynthesis; quinolinate from L-kynurenine: step 2/3. Catalyzes the cleavage of L-kynurenine (L-Kyn) and L-3-hydroxykynurenine (L-3OHKyn) into anthranilic acid (AA) and 3-hydroxyanthranilic acid (3-OHAA), respectively. This chain is Kynureninase 1 (bna5-1), found in Aspergillus fumigatus (strain CBS 144.89 / FGSC A1163 / CEA10) (Neosartorya fumigata).